The following is a 155-amino-acid chain: Eosinophil cationic protein (155 aa).

The first 25 residues, 1–25 (MGLKLLESRLCLLLSLGLVLMLASC), serve as a signal peptide directing secretion. His-38 functions as the Proton acceptor in the catalytic mechanism. 4 cysteine pairs are disulfide-bonded: Cys-47–Cys-106, Cys-61–Cys-118, Cys-79–Cys-133, and Cys-86–Cys-94. 62 to 66 (KDINT) contributes to the substrate binding site. Asn-88 and Asn-107 each carry an N-linked (GlcNAc...) asparagine glycan. The active-site Proton donor is the His-150.

The protein belongs to the pancreatic ribonuclease family.

The protein resides in the cytoplasmic granule. Cytotoxin and helminthotoxin with ribonuclease activity. Possesses a wide variety of biological activities. This chain is Eosinophil cationic protein (Rnase3), found in Rattus norvegicus (Rat).